A 499-amino-acid polypeptide reads, in one-letter code: Sensor histidine kinase PdtaS (499 aa).

The interval 4–149 (LGDLLAEHTM…PLEGAYLDCA (146 aa)) is GAF. The interval 178–289 (DGFIRLNEGG…TEVKRRDRAL (112 aa)) is PAS-like. One can recognise a Histidine kinase domain in the interval 298–493 (EIHHRVKNNL…DVVLRVPIGR (196 aa)). Histidine 301 is modified (phosphohistidine; by autocatalysis).

Autophosphorylated.

Its subcellular location is the cytoplasm. The enzyme catalyses ATP + protein L-histidine = ADP + protein N-phospho-L-histidine.. Its function is as follows. Member of the two-component regulatory system PdtaR/PdtaS. This two-component system plays an essential role in mycobacterial adaptation to poor nutrient conditions. Nutrient deprivation results in increasing intracellular concentrations of cyclic diguanosine monophosphate (c-di-GMP), which binds to the PdtaS sensor and promotes its autophosphorylation, leading to the activation of the signaling cascade. The phosphate group is then transferred to PdtaR. The polypeptide is Sensor histidine kinase PdtaS (Mycolicibacterium smegmatis (strain ATCC 700084 / mc(2)155) (Mycobacterium smegmatis)).